Reading from the N-terminus, the 343-residue chain is Labda-7,13(16),14-triene synthase (343 aa).

Residues Asp-114 and Glu-119 each coordinate Mg(2+). The DDXXXE motif motif lies at 114–119; it reads DDVHVE. Substrate is bound at residue Arg-206. Asn-252, Ser-256, and Glu-260 together coordinate Mg(2+). Residues 252–260 carry the NXXXSXXXE motif motif; that stretch reads NDLYSFAYE.

Belongs to the terpene synthase family. Mg(2+) serves as cofactor.

The enzyme catalyses (13E)-labda-7,13-dien-15-yl diphosphate = labda-7,13(16),14-triene + diphosphate. Its function is as follows. Involved in the biosynthesis of the labdane-type bicyclic diterpene labda-7,13(16),14-triene. Catalyzes the conversion of labda-7,13(E)-dienyl diphosphate to yield labda-7,13(16),14-triene. The polypeptide is Labda-7,13(16),14-triene synthase (Streptomyces clavuligerus).